Here is a 217-residue protein sequence, read N- to C-terminus: Uracil-DNA glycosylase (217 aa).

Catalysis depends on Asp62, which acts as the Proton acceptor.

Belongs to the uracil-DNA glycosylase (UDG) superfamily. UNG family.

The protein resides in the cytoplasm. It catalyses the reaction Hydrolyzes single-stranded DNA or mismatched double-stranded DNA and polynucleotides, releasing free uracil.. Its function is as follows. Excises uracil residues from the DNA which can arise as a result of misincorporation of dUMP residues by DNA polymerase or due to deamination of cytosine. The chain is Uracil-DNA glycosylase from Streptococcus pneumoniae serotype 19F (strain G54).